The following is a 466-amino-acid chain: Soluble pyridine nucleotide transhydrogenase (466 aa).

An FAD-binding site is contributed by 36 to 45 (EKESSVGGGC).

This sequence belongs to the class-I pyridine nucleotide-disulfide oxidoreductase family. The cofactor is FAD.

The protein localises to the cytoplasm. The enzyme catalyses NAD(+) + NADPH = NADH + NADP(+). In terms of biological role, conversion of NADPH, generated by peripheral catabolic pathways, to NADH, which can enter the respiratory chain for energy generation. This Vibrio atlanticus (strain LGP32) (Vibrio splendidus (strain Mel32)) protein is Soluble pyridine nucleotide transhydrogenase.